Here is a 328-residue protein sequence, read N- to C-terminus: Probable ABC transporter permease YtrC (328 aa).

Transmembrane regions (helical) follow at residues 16–36 (VVIL…IVNT), 60–80 (ISNL…CFLG), 110–130 (GFVI…LILV), 144–164 (IGVI…GALT), 167–187 (AFAQ…IIAL), 236–256 (YLLL…FISF), 277–297 (VQIL…YYTG), and 300–320 (IIGY…VSYF).

This sequence belongs to the ABC-5 integral membrane protein family. The complex is composed of 2 ATP-binding proteins (YtrB and YtrE), 2 transmembrane proteins (YtrC and YtrD) and a solute-binding protein (YtrF).

It localises to the cell membrane. Its function is as follows. Part of the ABC transporter complex YtrBCDEF that plays a role in acetoin utilization during stationary phase and sporulation. This chain is Probable ABC transporter permease YtrC (ytrC), found in Bacillus subtilis (strain 168).